Reading from the N-terminus, the 59-residue chain is Dendroaspin (59 aa).

4 cysteine pairs are disulfide-bonded: C3–C22, C17–C37, C39–C51, and C52–C57. The short motif at 43 to 45 (RGD) is the Cell attachment site element.

Belongs to the three-finger toxin family. Short-chain subfamily. Antiplatelet toxin sub-subfamily. As to expression, expressed by the venom gland.

It localises to the secreted. Its function is as follows. Inhibits ADP-induced platelet aggregation and inhibits the binding of purified platelet fibrinogen receptor alpha-IIb/beta-3 (ITGA2B/ITGB3) to immobilized fibrinogen. Has also been described to inhibit cell adhesion to fibrinogen, fibronectin, laminin and collagen. The sequence is that of Dendroaspin from Dendroaspis jamesoni kaimosae (Eastern Jameson's mamba).